The following is a 199-amino-acid chain: Holliday junction branch migration complex subunit RuvA (199 aa).

The interval 1–64 (MIGRLRGILL…DDAHLLYAFA (64 aa)) is domain I. The interval 65–143 (SEKERGLFRS…DMPESGVAGM (79 aa)) is domain II. The interval 144-150 (RPDRVDG) is flexible linker. The domain III stretch occupies residues 151–199 (SAPGTVAEAVSALVALGYKPNEASRAVRRLDTEALTTEEIIRQALQRML).

It belongs to the RuvA family. In terms of assembly, homotetramer. Forms an RuvA(8)-RuvB(12)-Holliday junction (HJ) complex. HJ DNA is sandwiched between 2 RuvA tetramers; dsDNA enters through RuvA and exits via RuvB. An RuvB hexamer assembles on each DNA strand where it exits the tetramer. Each RuvB hexamer is contacted by two RuvA subunits (via domain III) on 2 adjacent RuvB subunits; this complex drives branch migration. In the full resolvosome a probable DNA-RuvA(4)-RuvB(12)-RuvC(2) complex forms which resolves the HJ.

The protein resides in the cytoplasm. The RuvA-RuvB-RuvC complex processes Holliday junction (HJ) DNA during genetic recombination and DNA repair, while the RuvA-RuvB complex plays an important role in the rescue of blocked DNA replication forks via replication fork reversal (RFR). RuvA specifically binds to HJ cruciform DNA, conferring on it an open structure. The RuvB hexamer acts as an ATP-dependent pump, pulling dsDNA into and through the RuvAB complex. HJ branch migration allows RuvC to scan DNA until it finds its consensus sequence, where it cleaves and resolves the cruciform DNA. The polypeptide is Holliday junction branch migration complex subunit RuvA (Nitrosococcus oceani (strain ATCC 19707 / BCRC 17464 / JCM 30415 / NCIMB 11848 / C-107)).